Here is a 202-residue protein sequence, read N- to C-terminus: MNPEYDYLFKLLLIGDSGVGKSCLLLRFADDTYTESYISTIGVDFKIRTIELDGKTIKLQIWDTAGQERFRTITSSYYRGAHGIIVVYDVTDQESFNNVKQWLQEIDRYASENVNKLLVGNKCDLTTKKVVDYTTAKEFADSLGIPFLETSAKNATNVEQAFMTMAAEIKKRMGPGATSGGSEKSNVNIQSTPVKSSGGGCC.

Residues 15–23, 33–40, 63–67, 121–124, and 151–153 contribute to the GTP site; these read GDSGVGKSC, YTESYIST, DTAGQ, NKCD, and SAK. The short motif at 37 to 45 is the Effector region element; the sequence is YISTIGVDF. Positions 173–202 are disordered; that stretch reads MGPGATSGGSEKSNVNIQSTPVKSSGGGCC. The segment covering 180–195 has biased composition (polar residues); sequence GGSEKSNVNIQSTPVK. 2 S-geranylgeranyl cysteine lipidation sites follow: Cys-201 and Cys-202.

This sequence belongs to the small GTPase superfamily. Rab family.

It localises to the cell membrane. In terms of biological role, protein transport. Probably involved in vesicular traffic. The polypeptide is Ras-related protein ORAB-1 (Diplobatis ommata (Ocellated electric ray)).